The chain runs to 385 residues: Polyketide synthase 3 (385 aa).

C157 is a catalytic residue.

This sequence belongs to the thiolase-like superfamily. Chalcone/stilbene synthases family. As to expression, expressed in male and female flowers, and seedlings.

The protein localises to the cytoplasm. Polyketide synthase responsible for the biosynthesis of secondary metabolites. This is Polyketide synthase 3 (PKSF3) from Cannabis sativa (Hemp).